A 152-amino-acid polypeptide reads, in one-letter code: Protein FERTILITY RESTORER RF2, mitochondrial (152 aa).

Residues 1–52 constitute a mitochondrion transit peptide; the sequence is MSTLVTCSLPGAVTTHASTRRFGGSQFQTSQASCISFKREVSAKAVLRSVRC. Polar residues predominate over residues 52–69; sequence CNATQTQSAQRKSSTATV. The disordered stretch occupies residues 52–99; the sequence is CNATQTQSAQRKSSTATVKRSDPKGKIQGPKLDDGSGGFPPFRFGKGG.

It localises to the mitochondrion. Restores fertility in rice varieties with LD-type cytoplasmic male sterility (CMS). CMS is caused by genetic incompatibility between nuclei and mitochondria within male reproductive organs. Corresponds to the functional allele of RF2, which is dependent of the presence of Ile-78 in the japonica cultivars Fukuyama and Owarihatamochi (AC F1SZ42), and indica cultivar Kasalath (AC F1SZ41). Non-functional RF2 alleles are found in japonica cultivars Taichung 65 and Nipponbare (AC F1SZ44), where Ile-78 is replaced by Thr-78. The protein is Protein FERTILITY RESTORER RF2, mitochondrial of Oryza sativa subsp. japonica (Rice).